The chain runs to 206 residues: Probable GTP-binding protein EngB (206 aa).

The EngB-type G domain occupies 23–202 (HTAEVAFVGR…WGALLDTFGK (180 aa)). Residues 31–38 (GRSNVGKS), 58–62 (GRTRT), 83–86 (DLPG), 150–153 (TKVD), and 181–183 (FSS) each bind GTP. Mg(2+) is bound by residues Ser-38 and Thr-60.

The protein belongs to the TRAFAC class TrmE-Era-EngA-EngB-Septin-like GTPase superfamily. EngB GTPase family. Requires Mg(2+) as cofactor.

In terms of biological role, necessary for normal cell division and for the maintenance of normal septation. In Myxococcus xanthus (strain DK1622), this protein is Probable GTP-binding protein EngB.